Consider the following 589-residue polypeptide: Type I restriction enzyme EcoAI specificity subunit (589 aa).

This sequence belongs to the type-I restriction system S methylase family. As to quaternary structure, the type I restriction/modification system is composed of three polypeptides R, M and S. The restriction enzyme has stoichiometry R(2)M(2)S(1) while the methyltransferase is M(2)S(1).

In terms of biological role, the specificity (S) subunit of a type I restriction enzyme; this subunit dictates DNA sequence specificity. The M and S subunits together form a methyltransferase (MTase) that methylates A-2 on the top strand and A-3 on the bottom strand of the sequence 5'-GAGN(7)GTCA-3'. In the presence of the R subunit the complex can also act as an endonuclease, binding to the same target sequence but cutting the DNA some distance from this site. Whether the DNA is cut or modified depends on the methylation state of the target sequence. When the target site is unmodified, the DNA is cut. When the target site is hemimethylated, the complex acts as a maintenance MTase modifying the DNA so that both strands become methylated. After locating a non-methylated recognition site, the enzyme complex serves as a molecular motor that translocates DNA in an ATP-dependent manner until a collision occurs that triggers cleavage. In Escherichia coli, this protein is Type I restriction enzyme EcoAI specificity subunit.